The sequence spans 458 residues: tRNA-2-methylthio-N(6)-dimethylallyladenosine synthase (458 aa).

An MTTase N-terminal domain is found at 15 to 134 (KKVFIKTYGC…LPELLQQAQQ (120 aa)). [4Fe-4S] cluster is bound by residues Cys-24, Cys-60, Cys-97, Cys-175, Cys-179, and Cys-182. Residues 161-393 (QKRGVSAFLT…QALLLDQQHR (233 aa)) form the Radical SAM core domain. The region spanning 396 to 457 (RSKIGQTTDV…SNSFVGEKAN (62 aa)) is the TRAM domain.

The protein belongs to the methylthiotransferase family. MiaB subfamily. Monomer. The cofactor is [4Fe-4S] cluster.

Its subcellular location is the cytoplasm. The catalysed reaction is N(6)-dimethylallyladenosine(37) in tRNA + (sulfur carrier)-SH + AH2 + 2 S-adenosyl-L-methionine = 2-methylsulfanyl-N(6)-dimethylallyladenosine(37) in tRNA + (sulfur carrier)-H + 5'-deoxyadenosine + L-methionine + A + S-adenosyl-L-homocysteine + 2 H(+). Functionally, catalyzes the methylthiolation of N6-(dimethylallyl)adenosine (i(6)A), leading to the formation of 2-methylthio-N6-(dimethylallyl)adenosine (ms(2)i(6)A) at position 37 in tRNAs that read codons beginning with uridine. The protein is tRNA-2-methylthio-N(6)-dimethylallyladenosine synthase of Bartonella bacilliformis (strain ATCC 35685 / KC583 / Herrer 020/F12,63).